A 57-amino-acid polypeptide reads, in one-letter code: uncharacterized protein (57 aa).

Residues 1 to 24 (MYDTWFVLTAVVLFVLVLIGNVHG) form the signal peptide.

As to expression, prismatic layer of shell (at protein level).

Its subcellular location is the secreted. This is an uncharacterized protein from Margaritifera margaritifera (Freshwater pearl mussel).